A 321-amino-acid chain; its full sequence is Lipoyl synthase (321 aa).

7 residues coordinate [4Fe-4S] cluster: C68, C73, C79, C94, C98, C101, and S308. Positions 80–297 (FNHGTATFMI…KVLADELGFT (218 aa)) constitute a Radical SAM core domain.

This sequence belongs to the radical SAM superfamily. Lipoyl synthase family. [4Fe-4S] cluster serves as cofactor.

The protein resides in the cytoplasm. The enzyme catalyses [[Fe-S] cluster scaffold protein carrying a second [4Fe-4S](2+) cluster] + N(6)-octanoyl-L-lysyl-[protein] + 2 oxidized [2Fe-2S]-[ferredoxin] + 2 S-adenosyl-L-methionine + 4 H(+) = [[Fe-S] cluster scaffold protein] + N(6)-[(R)-dihydrolipoyl]-L-lysyl-[protein] + 4 Fe(3+) + 2 hydrogen sulfide + 2 5'-deoxyadenosine + 2 L-methionine + 2 reduced [2Fe-2S]-[ferredoxin]. It participates in protein modification; protein lipoylation via endogenous pathway; protein N(6)-(lipoyl)lysine from octanoyl-[acyl-carrier-protein]: step 2/2. Its function is as follows. Catalyzes the radical-mediated insertion of two sulfur atoms into the C-6 and C-8 positions of the octanoyl moiety bound to the lipoyl domains of lipoate-dependent enzymes, thereby converting the octanoylated domains into lipoylated derivatives. This is Lipoyl synthase from Shewanella denitrificans (strain OS217 / ATCC BAA-1090 / DSM 15013).